Reading from the N-terminus, the 148-residue chain is MKVILLEELEGRGSFGDIITVKDGFANNYLIPRKLALPATEGNIKHIQSILSQKARKLEKIRTQAQELAKKLDGAEITIKKPVGQNGKLFGAITTSDIAKALNEKGFNVDKKQIIISSPIKNLGLYTIKVRLHNDIYASIKVNVEEQK.

This sequence belongs to the bacterial ribosomal protein bL9 family.

Its function is as follows. Binds to the 23S rRNA. The polypeptide is Large ribosomal subunit protein bL9 (Hydrogenobaculum sp. (strain Y04AAS1)).